Consider the following 683-residue polypeptide: Bifunctional lysine-specific demethylase and histidyl-hydroxylase NO66 (683 aa).

The span at methionine 1–asparagine 26 shows a compositional bias: polar residues. Disordered stretches follow at residues methionine 1–glutamine 162 and alanine 179–serine 208. Residues leucine 54–methionine 65 are compositionally biased toward basic and acidic residues. Residues isoleucine 85–lysine 94 are compositionally biased toward polar residues. Residues glycine 95–arginine 108 show a composition bias toward basic residues. Positions proline 116–lysine 125 are enriched in low complexity. Serine 152 is modified (phosphoserine). The residue at position 158 (threonine 158) is a Phosphothreonine. The residue at position 159 (serine 159) is a Phosphoserine. A compositionally biased stretch (low complexity) spans alanine 179–alanine 189. Positions asparagine 341–valine 480 constitute a JmjC domain. Residues histidine 381, aspartate 383, and histidine 446 each coordinate Fe cation.

Belongs to the ROX family. NO66 subfamily. It depends on Fe(2+) as a cofactor.

It localises to the nucleus. It catalyses the reaction N(6),N(6)-dimethyl-L-lysyl(36)-[histone H3] + 2 2-oxoglutarate + 2 O2 = L-lysyl(36)-[histone H3] + 2 formaldehyde + 2 succinate + 2 CO2. In terms of biological role, oxygenase that can act as both a histone lysine demethylase and a ribosomal histidine hydroxylase. Specifically demethylates 'Lys-4' (H3K4me) and 'Lys-36' (H3K36me) of histone H3, thereby playing a central role in histone code. The protein is Bifunctional lysine-specific demethylase and histidyl-hydroxylase NO66 of Drosophila yakuba (Fruit fly).